The chain runs to 286 residues: Homoserine kinase (286 aa).

78–88 serves as a coordination point for ATP; the sequence is PLARGLGSSSS.

The protein belongs to the GHMP kinase family. Homoserine kinase subfamily.

It localises to the cytoplasm. The catalysed reaction is L-homoserine + ATP = O-phospho-L-homoserine + ADP + H(+). It functions in the pathway amino-acid biosynthesis; L-threonine biosynthesis; L-threonine from L-aspartate: step 4/5. Functionally, catalyzes the ATP-dependent phosphorylation of L-homoserine to L-homoserine phosphate. In Streptococcus equi subsp. zooepidemicus (strain H70), this protein is Homoserine kinase.